The primary structure comprises 358 residues: Probable tartrate dehydrogenase/decarboxylase TtuC' (358 aa).

Positions 222, 246, and 250 each coordinate Mn(2+).

Belongs to the isocitrate and isopropylmalate dehydrogenases family. It depends on Mg(2+) as a cofactor. The cofactor is Mn(2+). K(+) serves as cofactor.

Its subcellular location is the cytoplasm. It carries out the reaction tartrate + NAD(+) = 2-hydroxy-3-oxosuccinate + NADH + H(+). The catalysed reaction is (2R,3S)-tartrate + NAD(+) = 2-hydroxy-3-oxosuccinate + NADH + H(+). The enzyme catalyses (2R,3R)-tartrate + NAD(+) = 2-hydroxy-3-oxosuccinate + NADH + H(+). It catalyses the reaction (2R,3R)-tartrate + H(+) = (R)-glycerate + CO2. It carries out the reaction (R)-malate + NAD(+) = pyruvate + CO2 + NADH. The protein operates within carbohydrate acid metabolism; tartrate degradation; 2-hydroxy-3-oxosuccinate from L-tartrate: step 1/1. Its pathway is carbohydrate acid metabolism; tartrate degradation; 2-hydroxy-3-oxosuccinate from meso-tartrate: step 1/1. It functions in the pathway carbohydrate acid metabolism; tartrate degradation; D-glycerate from L-tartrate: step 1/1. Has multiple catalytic activities. Apart from catalyzing the oxidation of (+)-tartrate to oxaloglycolate, also converts meso-tartrate to D-glycerate and catalyzes the oxidative decarboxylation of D-malate to pyruvate. The protein is Probable tartrate dehydrogenase/decarboxylase TtuC' (ttuC') of Agrobacterium vitis (Rhizobium vitis).